We begin with the raw amino-acid sequence, 239 residues long: 1-(5-phosphoribosyl)-5-[(5-phosphoribosylamino)methylideneamino] imidazole-4-carboxamide isomerase (239 aa).

The active-site Proton acceptor is aspartate 12. The Proton donor role is filled by aspartate 133.

It belongs to the HisA/HisF family.

It is found in the cytoplasm. It carries out the reaction 1-(5-phospho-beta-D-ribosyl)-5-[(5-phospho-beta-D-ribosylamino)methylideneamino]imidazole-4-carboxamide = 5-[(5-phospho-1-deoxy-D-ribulos-1-ylimino)methylamino]-1-(5-phospho-beta-D-ribosyl)imidazole-4-carboxamide. Its pathway is amino-acid biosynthesis; L-histidine biosynthesis; L-histidine from 5-phospho-alpha-D-ribose 1-diphosphate: step 4/9. This chain is 1-(5-phosphoribosyl)-5-[(5-phosphoribosylamino)methylideneamino] imidazole-4-carboxamide isomerase, found in Sulfurihydrogenibium sp. (strain YO3AOP1).